The following is a 409-amino-acid chain: MGIYSCSAVLSFGLKCPLVIARHRLYHRMFRRNPLLVESHLNRLCSCKCNASLAIGEVVEKEDAEQSRSFNWADVGLNLTEEQDEAITRIPIKMSKRCQALMRQIICFSPEKGSFCDLLGAWLRRMNPIRADWLSILKELKNLDSPFYIKVAEFSLLQDSFEANARDYTKIIHYYGKLNQVEDAERTLLSMKNRGFLIDQVTLTAMVQLYSKAGCHKLAEETFNEIKLLGEPLDYRSYGSMIMAYIRAGVPEKGESLLREMDSQEICAGREVYKALLRDYSMGGDAEGAKRVFDAVQIAGITPDVKLCGLLINAYSVSGQSQNARLAFENMRKAGIKATDKCVALVLAAYEKEEKLNEALGFLVELEKDSIMLGKEASAVLAQWFKKLGVVEEVELLLREFSSSQSQPL.

6 PPR repeats span residues 164-198 (NARDYTKIIHYYGKLNQVEDAERTLLSMKNRGFLI), 199-233 (DQVTLTAMVQLYSKAGCHKLAEETFNEIKLLGEPL), 234-268 (DYRSYGSMIMAYIRAGVPEKGESLLREMDSQEICA), 269-303 (GREVYKALLRDYSMGGDAEGAKRVFDAVQIAGITP), 304-338 (DVKLCGLLINAYSVSGQSQNARLAFENMRKAGIKA), and 339-373 (TDKCVALVLAAYEKEEKLNEALGFLVELEKDSIML).

This sequence belongs to the PPR family. P subfamily.

The sequence is that of Pentatricopeptide repeat-containing protein At1g01970 from Arabidopsis thaliana (Mouse-ear cress).